The following is a 223-amino-acid chain: Phosphoribosylformylglycinamidine synthase subunit PurQ (223 aa).

Residues 2 to 223 form the Glutamine amidotransferase type-1 domain; it reads KVAIIRFPGT…LLENFINFNF (222 aa). Cys-84 functions as the Nucleophile in the catalytic mechanism. Residues His-192 and Glu-194 contribute to the active site.

As to quaternary structure, part of the FGAM synthase complex composed of 1 PurL, 1 PurQ and 2 PurS subunits.

The protein resides in the cytoplasm. The catalysed reaction is N(2)-formyl-N(1)-(5-phospho-beta-D-ribosyl)glycinamide + L-glutamine + ATP + H2O = 2-formamido-N(1)-(5-O-phospho-beta-D-ribosyl)acetamidine + L-glutamate + ADP + phosphate + H(+). The enzyme catalyses L-glutamine + H2O = L-glutamate + NH4(+). Its pathway is purine metabolism; IMP biosynthesis via de novo pathway; 5-amino-1-(5-phospho-D-ribosyl)imidazole from N(2)-formyl-N(1)-(5-phospho-D-ribosyl)glycinamide: step 1/2. Its function is as follows. Part of the phosphoribosylformylglycinamidine synthase complex involved in the purines biosynthetic pathway. Catalyzes the ATP-dependent conversion of formylglycinamide ribonucleotide (FGAR) and glutamine to yield formylglycinamidine ribonucleotide (FGAM) and glutamate. The FGAM synthase complex is composed of three subunits. PurQ produces an ammonia molecule by converting glutamine to glutamate. PurL transfers the ammonia molecule to FGAR to form FGAM in an ATP-dependent manner. PurS interacts with PurQ and PurL and is thought to assist in the transfer of the ammonia molecule from PurQ to PurL. This Campylobacter jejuni subsp. jejuni serotype O:2 (strain ATCC 700819 / NCTC 11168) protein is Phosphoribosylformylglycinamidine synthase subunit PurQ.